The chain runs to 504 residues: Serine O-succinyltransferase (504 aa).

The N-terminal 26 residues, methionine 1–leucine 26, are a transit peptide targeting the mitochondrion. Residues glutamine 49–proline 70 are disordered. Residues proline 57–proline 70 are compositionally biased toward low complexity. An AB hydrolase-1 domain is found at asparagine 117–glutamate 395. Residues glycine 124–alanine 127 form an important for substrate specificity region. The Nucleophile role is filled by serine 221. Arginine 290 provides a ligand contact to substrate. Residues aspartate 443 and histidine 480 contribute to the active site. Aspartate 481 contributes to the substrate binding site.

It belongs to the AB hydrolase superfamily. MetX family.

It localises to the mitochondrion. It catalyses the reaction succinyl-CoA + L-serine = O-succinyl-L-serine + CoA. The protein operates within amino-acid biosynthesis; L-cysteine biosynthesis; L-cysteine from L-serine: step 1/2. In terms of biological role, transfers a succinyl group from succinyl-CoA to L-serine, forming succinyl-L-serine. Also has weak serine acetyl transferase activity and homoserine succinyl transferase activity. The protein is Serine O-succinyltransferase of Schizosaccharomyces pombe (strain 972 / ATCC 24843) (Fission yeast).